The following is a 394-amino-acid chain: NAD(P)H-quinone oxidoreductase subunit H (394 aa).

The protein belongs to the complex I 49 kDa subunit family. As to quaternary structure, NDH-1 can be composed of about 15 different subunits; different subcomplexes with different compositions have been identified which probably have different functions.

The protein resides in the cellular thylakoid membrane. It catalyses the reaction a plastoquinone + NADH + (n+1) H(+)(in) = a plastoquinol + NAD(+) + n H(+)(out). It carries out the reaction a plastoquinone + NADPH + (n+1) H(+)(in) = a plastoquinol + NADP(+) + n H(+)(out). NDH-1 shuttles electrons from an unknown electron donor, via FMN and iron-sulfur (Fe-S) centers, to quinones in the respiratory and/or the photosynthetic chain. The immediate electron acceptor for the enzyme in this species is believed to be plastoquinone. Couples the redox reaction to proton translocation, and thus conserves the redox energy in a proton gradient. Cyanobacterial NDH-1 also plays a role in inorganic carbon-concentration. This is NAD(P)H-quinone oxidoreductase subunit H from Microcystis aeruginosa (strain NIES-843 / IAM M-2473).